A 398-amino-acid polypeptide reads, in one-letter code: Glia-derived nexin (398 aa).

Residues 1–19 form the signal peptide; that stretch reads MNWHLPLFLLASVTLPSIC. N-linked (GlcNAc...) asparagine glycosylation is found at Asn118 and Asn159.

This sequence belongs to the serpin family.

It is found in the secreted. The protein resides in the extracellular space. In terms of biological role, serine protease inhibitor with activity toward thrombin, trypsin, and urokinase. Promotes neurite extension by inhibiting thrombin. Binds heparin. The protein is Glia-derived nexin (SERPINE2) of Homo sapiens (Human).